We begin with the raw amino-acid sequence, 65 residues long: Movement protein TGBp3 (65 aa).

The Lumenal portion of the chain corresponds to 1–3; that stretch reads MQA. The chain crosses the membrane as a helical span at residues 4-24; that stretch reads SGLILVALFSAVVSYLALLHL. Topologically, residues 25–65 are cytoplasmic; it reads SSSSSSCVVVVTGESFRISGCDFTEEFIGFAKTLRVANSQP.

It belongs to the Tymovirales TGBp3 protein family.

Its subcellular location is the host endoplasmic reticulum membrane. Functionally, plays a role in viral cell-to-cell propagation, by facilitating genome transport to neighboring plant cells through plasmosdesmata. May induce the formation of granular vesicles derived from the Endoplasmic reticulum, which align on actin filaments. The chain is Movement protein TGBp3 from Carnation latent virus (CLV).